Consider the following 230-residue polypeptide: MGQQISDQTQLVINKLPEKVAKHVTLVRESGSLTYEEFLGRVAELNDVTAKVAAGQEKHLLFEVQPGSDSSAFWKVVVRVVCTKINKSSGIVEASRIMNLYQFIQLYKDITSQAAGVLAQSSTSEEPDENPSSVTSCQASLWMGRVKQLTDEEECCICMDGRADLILPCAHSFCQKCIDKWSDRHRNCPICRLQMTGANESWVVSDAPTEDDMANYILNMADEAGQPHRP.

G2 carries N-myristoyl glycine lipidation. The segment at 155–192 (CCICMDGRADLILPCAHSFCQKCIDKWSDRHRNCPICR) adopts an RING-type zinc-finger fold.

Isoform 1 is testis-specific. Isoform 2 is expressed in heart, brain, skeletal muscle, kidney, pancreas, lung, liver and testis. Isoform 3 is expressed in heart, liver, and kidney.

The protein localises to the membrane. In terms of biological role, may be involved in spermatogenesis. The sequence is that of RING finger protein 141 (Rnf141) from Mus musculus (Mouse).